The sequence spans 65 residues: Large ribosomal subunit protein uL29 (65 aa).

This sequence belongs to the universal ribosomal protein uL29 family.

This is Large ribosomal subunit protein uL29 from Desulforamulus reducens (strain ATCC BAA-1160 / DSM 100696 / MI-1) (Desulfotomaculum reducens).